The chain runs to 228 residues: NAD(P)H-hydrate epimerase (228 aa).

Positions 9 to 209 (VRAVERLAHR…LLGLTPAFLA (201 aa)) constitute a YjeF N-terminal domain. 53 to 57 (NNGGD) lines the (6S)-NADPHX pocket. Asn-54 and Asp-115 together coordinate K(+). Residues 119-125 (GIGLARP) and Asp-148 each bind (6S)-NADPHX. Residue Ser-151 participates in K(+) binding.

This sequence belongs to the NnrE/AIBP family. K(+) is required as a cofactor.

It carries out the reaction (6R)-NADHX = (6S)-NADHX. It catalyses the reaction (6R)-NADPHX = (6S)-NADPHX. In terms of biological role, catalyzes the epimerization of the S- and R-forms of NAD(P)HX, a damaged form of NAD(P)H that is a result of enzymatic or heat-dependent hydration. This is a prerequisite for the S-specific NAD(P)H-hydrate dehydratase to allow the repair of both epimers of NAD(P)HX. This Bordetella pertussis (strain CS) protein is NAD(P)H-hydrate epimerase.